We begin with the raw amino-acid sequence, 973 residues long: FHF complex subunit HOOK-interacting protein 1B (973 aa).

3 disordered regions span residues 466 to 493 (SSPS…VVTV), 510 to 547 (SLGG…PGEL), and 573 to 647 (SAPY…EGAK). At Ser467 the chain carries Phosphoserine. The span at 482–493 (SPSVDSSSVVTV) shows a compositional bias: low complexity. A phosphoserine mark is found at Ser510, Ser523, Ser529, and Ser533. Composition is skewed to low complexity over residues 529-538 (SPASSPGRRP) and 622-639 (GARE…NGLP). 2 positions are modified to phosphoserine: Ser859 and Ser898.

This sequence belongs to the FHIP family. As to quaternary structure, component of the FTS/Hook/FHIP complex (FHF complex), composed of AKTIP/FTS, FHIP1B, and one or more members of the Hook family of proteins HOOK1, HOOK2, and HOOK3. The FHF complex associates with the homotypic vesicular sorting complex (the HOPS complex).

Functionally, component of the FTS/Hook/FHIP complex (FHF complex). The FHF complex may function to promote vesicle trafficking and/or fusion via the homotypic vesicular protein sorting complex (the HOPS complex). FHF complex promotes the distribution of AP-4 complex to the perinuclear area of the cell. This Bos taurus (Bovine) protein is FHF complex subunit HOOK-interacting protein 1B (FHIP1B).